Consider the following 88-residue polypeptide: Small cysteine-rich outer membrane protein OmcA (88 aa).

A signal peptide spans 1–18 (MKKTALLAALCSVVSLSS). A lipid anchor (N-palmitoyl cysteine) is attached at cysteine 19. Cysteine 19 is lipidated: S-diacylglycerol cysteine.

As to quaternary structure, part of a disulfide cross-linked outer membrane complex (COMC) composed of the major outer membrane porin (MOMP), the small cysteine-rich protein (OmcA) and the large cysteine-rich periplasmic protein (OmcB).

It is found in the cell outer membrane. In terms of biological role, in elementary bodies (EBs, the infectious stage, which is able to survive outside the host cell) provides the structural integrity of the outer envelope through disulfide cross-links with the large cysteine-rich periplasmic protein and the major outer membrane porin. It has been described in publications as the Sarkosyl-insoluble COMC (Chlamydia outer membrane complex), and serves as the functional equivalent of peptidoglycan. In Chlamydia trachomatis serovar B (strain Jali20/OT), this protein is Small cysteine-rich outer membrane protein OmcA (omcA).